A 354-amino-acid polypeptide reads, in one-letter code: Protein PHLOEM PROTEIN 2-LIKE A8 (354 aa).

In terms of domain architecture, TIR spans 12–179 (TGPQVFINFR…EMILEIQKAL (168 aa)). Glu-86 is a catalytic residue.

It carries out the reaction NAD(+) + H2O = ADP-D-ribose + nicotinamide + H(+). This is Protein PHLOEM PROTEIN 2-LIKE A8 (PP2A8) from Arabidopsis thaliana (Mouse-ear cress).